The primary structure comprises 347 residues: MELLCSPTSLSSSFALSSALLVPRSFSMPGTRRFMVLCSSQKESQMTVSVTGATGFIGRRLVQRLRADNHAIRVLTRSKSKAEQIFPAKDFPGIVIAEESEWKNCVQGSTAVVNLAGLPISTRWSPEIKKEIKGSRIRVTSKVVDLINNSPAEARPTVLVSATAVGYYGTSETGVFDENSPSGKDYLAEVCREWEGTALKANKDVRVALIRIGVVLGKDGGALAMMIPFFQMFAGGPLGSGQQWFSWIHVDDLVNLIYEALTNPSYKGVINGTAPNPVRLGEMCQQLGSVLSRPSWLPVPDFALKALLGEGATVVLEGQKVLPVRAKELGFEFKYKYVKDALRAIMQ.

The transit peptide at 1 to 37 directs the protein to the chloroplast; it reads MELLCSPTSLSSSFALSSALLVPRSFSMPGTRRFMVL. Residues 54–57, 76–77, 115–119, and Arg136 contribute to the NADP(+) site; these read TGFI, TR, and LAGLP.

As to quaternary structure, can form homodimers. In terms of tissue distribution, expressed in leaves, stems and flower buds.

The protein localises to the plastid. The protein resides in the chloroplast inner membrane. Its subcellular location is the chloroplast. In terms of biological role, putative NADP-dependent oxidoreductase that acts as a positive regulator of chloroplast division. May play a role at an early stage of the division process. The sequence is that of Epimerase family protein SDR39U1 homolog, chloroplastic from Arabidopsis thaliana (Mouse-ear cress).